Consider the following 128-residue polypeptide: RYamide neuropeptides (128 aa).

Positions 1–23 are cleaved as a signal peptide; it reads MHARKLIVVLVYILTVLVSVAVS. Residues 26 to 29 constitute a propeptide that is removed on maturation; the sequence is YTSE. Tyr44 bears the Tyrosine amide mark. Positions 47–63 are excised as a propeptide; it reads GGPSPNNKENKVNIRPR. Tyr73 bears the Tyrosine amide mark. A propeptide spanning residues 77-128 is cleaved from the precursor; the sequence is SGWSPNASLVYPVSTPLCGLDEDLSCAYTGISDLYRCTPRKGESEEFTTSSN.

Its subcellular location is the secreted. Its function is as follows. Neuropeptides RYamide-1 and RYamide-2 are ligands for the G-protein coupled receptor RYa-R. RYamide-2 is the most potent activator of RYa-R. This is RYamide neuropeptides from Tribolium castaneum (Red flour beetle).